The chain runs to 471 residues: Histone deacetylase 6 (471 aa).

An N-acetylmethionine modification is found at M1. The segment at R20–G333 is histone deacetylase. H153 functions as the Proton donor/acceptor in the catalytic mechanism. 3 residues coordinate Zn(2+): D188, H190, and D276. The disordered stretch occupies residues P389–S471. Positions G453–E463 are enriched in acidic residues.

Belongs to the histone deacetylase family. HD type 1 subfamily. Interacts with Coi1, which functions in an SCF complex that recruits regulators for ubiquitination. Interacts with AHL22. Interacts with AS1. Part of the AS1 repressor complex composed of AS1, LBD6/AS2 and HDA6. Binds to EBS and SHL. Interacts with MBD6. Interacts with HDA5. Interacts with FLD. Requires Zn(2+) as cofactor. Not detected in leaves, stems, flowers and young siliques.

It localises to the nucleus. The protein localises to the nucleolus. It catalyses the reaction N(6)-acetyl-L-lysyl-[histone] + H2O = L-lysyl-[histone] + acetate. Its activity is regulated as follows. Inhibited by trichostatin A. Responsible for the deacetylation of lysine residues on the N-terminal part of the core histones (H2A, H2B, H3 and H4). Might remove acetyl residues only from specific targets, such as rDNA repeats or complex transgenes. Histone deacetylation gives a tag for epigenetic repression and plays an important role in transcriptional regulation, cell cycle progression and developmental events. Histone deacetylases act via the formation of large multiprotein complexes. Required for rRNA gene silencing in nucleolar dominance. Plays a role in transgene silencing, but this effect seems to bee independent of the histone deacetylase activity. Part of the AS1 repressor complex to regulate the KNOX expression in leaf development. Binds to KNAT1, KNAT2, and KNATM chromatin. Involved in the regulation of flowering time. Forms a histone deacetylase complex with HDA5, FLD and MSI4/FVE that represses FLC gene expression to control flowering time. The sequence is that of Histone deacetylase 6 from Arabidopsis thaliana (Mouse-ear cress).